The chain runs to 212 residues: Methylthioribulose-1-phosphate dehydratase (212 aa).

2 residues coordinate Zn(2+): His98 and His100.

Belongs to the aldolase class II family. MtnB subfamily. It depends on Zn(2+) as a cofactor.

The catalysed reaction is 5-(methylsulfanyl)-D-ribulose 1-phosphate = 5-methylsulfanyl-2,3-dioxopentyl phosphate + H2O. Its pathway is amino-acid biosynthesis; L-methionine biosynthesis via salvage pathway; L-methionine from S-methyl-5-thio-alpha-D-ribose 1-phosphate: step 2/6. In terms of biological role, catalyzes the dehydration of methylthioribulose-1-phosphate (MTRu-1-P) into 2,3-diketo-5-methylthiopentyl-1-phosphate (DK-MTP-1-P). The sequence is that of Methylthioribulose-1-phosphate dehydratase from Picosynechococcus sp. (strain ATCC 27264 / PCC 7002 / PR-6) (Agmenellum quadruplicatum).